The sequence spans 441 residues: tRNA modification GTPase MnmE (441 aa).

(6S)-5-formyl-5,6,7,8-tetrahydrofolate-binding residues include arginine 21, glutamate 79, and lysine 118. A TrmE-type G domain is found at 214-367 (GIHITILGAP…LVAELARVVE (154 aa)). GTP contacts are provided by residues 224–229 (NAGKSS), 243–249 (SAQAGTT), and 268–271 (DTAG). Mg(2+) is bound by residues serine 228 and threonine 249. Residue lysine 441 coordinates (6S)-5-formyl-5,6,7,8-tetrahydrofolate.

It belongs to the TRAFAC class TrmE-Era-EngA-EngB-Septin-like GTPase superfamily. TrmE GTPase family. In terms of assembly, homodimer. Heterotetramer of two MnmE and two MnmG subunits. K(+) serves as cofactor.

The protein resides in the cytoplasm. Its function is as follows. Exhibits a very high intrinsic GTPase hydrolysis rate. Involved in the addition of a carboxymethylaminomethyl (cmnm) group at the wobble position (U34) of certain tRNAs, forming tRNA-cmnm(5)s(2)U34. This chain is tRNA modification GTPase MnmE, found in Paramagnetospirillum magneticum (strain ATCC 700264 / AMB-1) (Magnetospirillum magneticum).